Consider the following 179-residue polypeptide: Probable galaptin lec-7 (179 aa).

Residues 11–138 (SVYQIEENLK…SVDIESIVFK (128 aa)) enclose the Galectin domain.

This is Probable galaptin lec-7 (lec-7) from Caenorhabditis elegans.